Consider the following 369-residue polypeptide: Mitogen-activated protein kinase 11 (369 aa).

The Protein kinase domain maps to 40–326 (VPPLRPIGRG…VDEALCHPYL (287 aa)). ATP-binding positions include 46–54 (IGRGASGIV) and Lys-69. Asp-166 acts as the Proton acceptor in catalysis. Thr-198 is subject to Phosphothreonine. A TXY motif is present at residues 198-200 (TEY). At Tyr-200 the chain carries Phosphotyrosine. Thr-203 is subject to Phosphothreonine.

It belongs to the protein kinase superfamily. CMGC Ser/Thr protein kinase family. MAP kinase subfamily. In terms of assembly, interacts with MKK1, MKK2 and MKK6. Dually phosphorylated on Thr-198 and Tyr-200, which activates the enzyme.

The enzyme catalyses L-seryl-[protein] + ATP = O-phospho-L-seryl-[protein] + ADP + H(+). The catalysed reaction is L-threonyl-[protein] + ATP = O-phospho-L-threonyl-[protein] + ADP + H(+). Its activity is regulated as follows. Activated by threonine and tyrosine phosphorylation. This is Mitogen-activated protein kinase 11 (MPK11) from Arabidopsis thaliana (Mouse-ear cress).